The following is a 411-amino-acid chain: Squalene synthase (411 aa).

Arg-49 and Arg-74 together coordinate NADP(+). The Mg(2+) site is built by Asp-77, Glu-80, and Asp-81. Arg-212, Lys-312, and Arg-314 together coordinate NADP(+). The helical transmembrane segment at 388–408 (SPVLIVVIFIILAIILAQLFG) threads the bilayer.

The protein belongs to the phytoene/squalene synthase family. Mg(2+) is required as a cofactor.

Its subcellular location is the membrane. It carries out the reaction 2 (2E,6E)-farnesyl diphosphate + NADH + H(+) = squalene + 2 diphosphate + NAD(+). It catalyses the reaction 2 (2E,6E)-farnesyl diphosphate + NADPH + H(+) = squalene + 2 diphosphate + NADP(+). In terms of biological role, converts farnesyl diphosphate (FPP) into squalene, a precursor for sterol biosynthesis in eukaryotes. The polypeptide is Squalene synthase (Solanum lycopersicum (Tomato)).